Consider the following 1240-residue polypeptide: Selection and upkeep of intraepithelial T-cells protein 6 (1240 aa).

The N-terminal stretch at 1 to 24 (MGTIGVPLTAHCVVLFLLQMVALS) is a signal peptide. The Extracellular segment spans residues 25-1086 (TEQFTVNGLE…CNKRNPFWKK (1062 aa)). The region spanning 26–141 (EQFTVNGLES…EEHIIEVKVT (116 aa)) is the Ig-like V-type domain. A disulfide bond links cysteine 49 and cysteine 123. The Ig-like C1-type domain maps to 142–231 (ATSSDIQILM…FVTHQEESIS (90 aa)). 3 N-linked (GlcNAc...) asparagine glycosylation sites follow: asparagine 155, asparagine 200, and asparagine 314. A disulfide bond links cysteine 163 and cysteine 217. The helical transmembrane segment at 1087–1107 (HALDLGISVFAIIVVTLIRHL) threads the bilayer. At 1108 to 1125 (NQREADQHFELDTLWSKD) the chain is on the cytoplasmic side. Residues 1126–1146 (TSVILCVLIMFNNRLKALIYF) traverse the membrane as a helical segment. The Extracellular segment spans residues 1147–1167 (RLYGYSPPGKTYKYIVNYILR). A helical transmembrane segment spans residues 1168-1188 (FSQPLFFIVYSAIILVMHLQI). The Cytoplasmic portion of the chain corresponds to 1189-1205 (QNTDSLFSLYNSWMVEM). The chain crosses the membrane as a helical span at residues 1206-1226 (IMVLGLLLAIFNVKNIATALL). The Extracellular segment spans residues 1227-1240 (HLGRTTLRLFRIKD).

It belongs to the SKINT family. Expressed in skin.

It is found in the membrane. In terms of biological role, may act by engaging a cell surface molecule on immature T-cells in the embryonic thymus. The chain is Selection and upkeep of intraepithelial T-cells protein 6 (Skint6) from Mus musculus (Mouse).